The primary structure comprises 395 residues: Phosphopentomutase (395 aa).

6 residues coordinate Mn(2+): Asp-16, Asp-289, His-294, Asp-330, His-331, and His-342.

It belongs to the phosphopentomutase family. Requires Mn(2+) as cofactor.

It is found in the cytoplasm. The catalysed reaction is 2-deoxy-alpha-D-ribose 1-phosphate = 2-deoxy-D-ribose 5-phosphate. The enzyme catalyses alpha-D-ribose 1-phosphate = D-ribose 5-phosphate. The protein operates within carbohydrate degradation; 2-deoxy-D-ribose 1-phosphate degradation; D-glyceraldehyde 3-phosphate and acetaldehyde from 2-deoxy-alpha-D-ribose 1-phosphate: step 1/2. In terms of biological role, isomerase that catalyzes the conversion of deoxy-ribose 1-phosphate (dRib-1-P) and ribose 1-phosphate (Rib-1-P) to deoxy-ribose 5-phosphate (dRib-5-P) and ribose 5-phosphate (Rib-5-P), respectively. This chain is Phosphopentomutase, found in Geobacillus kaustophilus (strain HTA426).